The sequence spans 330 residues: Ketol-acid reductoisomerase (NADP(+)) (330 aa).

Residues 2-182 (ARMYYDADAN…GGTRAGILET (181 aa)) form the KARI N-terminal Rossmann domain. NADP(+)-binding positions include 25–28 (YGSQ), serine 51, serine 53, and 83–86 (DEFQ). The active site involves histidine 108. Glycine 134 is an NADP(+) binding site. The 146-residue stretch at 183-328 (SFREETETDL…KDLRAMFSWL (146 aa)) folds into the KARI C-terminal knotted domain. Aspartate 191, glutamate 195, glutamate 227, and glutamate 231 together coordinate Mg(2+). Serine 252 provides a ligand contact to substrate.

The protein belongs to the ketol-acid reductoisomerase family. Mg(2+) serves as cofactor.

It carries out the reaction (2R)-2,3-dihydroxy-3-methylbutanoate + NADP(+) = (2S)-2-acetolactate + NADPH + H(+). It catalyses the reaction (2R,3R)-2,3-dihydroxy-3-methylpentanoate + NADP(+) = (S)-2-ethyl-2-hydroxy-3-oxobutanoate + NADPH + H(+). Its pathway is amino-acid biosynthesis; L-isoleucine biosynthesis; L-isoleucine from 2-oxobutanoate: step 2/4. It participates in amino-acid biosynthesis; L-valine biosynthesis; L-valine from pyruvate: step 2/4. In terms of biological role, involved in the biosynthesis of branched-chain amino acids (BCAA). Catalyzes an alkyl-migration followed by a ketol-acid reduction of (S)-2-acetolactate (S2AL) to yield (R)-2,3-dihydroxy-isovalerate. In the isomerase reaction, S2AL is rearranged via a Mg-dependent methyl migration to produce 3-hydroxy-3-methyl-2-ketobutyrate (HMKB). In the reductase reaction, this 2-ketoacid undergoes a metal-dependent reduction by NADPH to yield (R)-2,3-dihydroxy-isovalerate. The sequence is that of Ketol-acid reductoisomerase (NADP(+)) from Synechococcus elongatus (strain ATCC 33912 / PCC 7942 / FACHB-805) (Anacystis nidulans R2).